We begin with the raw amino-acid sequence, 666 residues long: Nuclear distribution protein nudE homolog 1 (666 aa).

Residues 14 to 195 (EEEIAHYREK…KDQLARAIAT (182 aa)) adopt a coiled-coil conformation. Disordered stretches follow at residues 40 to 64 (EFQQ…KQQA), 220 to 310 (DDIN…SGIP), 369 to 388 (KRVT…PAPH), and 397 to 666 (DHNT…KVKK). Over residues 251 to 274 (RSGTMSSIPVASPSTKRFSQQIPH) the composition is skewed to polar residues. Composition is skewed to low complexity over residues 275–287 (SPSF…STTS) and 372–383 (TSTTSTTSSTTT). The segment covering 400–410 (TTPTAQSQQFP) has biased composition (polar residues). 3 stretches are compositionally biased toward low complexity: residues 449–465 (PTFR…LPSR), 473–485 (ASGS…SGTA), and 536–554 (SATP…STSN). 2 stretches are compositionally biased toward polar residues: residues 587–599 (RQSL…TPTT) and 614–638 (SSLS…SGRP).

Belongs to the nudE family. In terms of assembly, self-associates. Interacts with PAC1.

The protein resides in the cytoplasm. Its subcellular location is the cytoskeleton. Functionally, required for nuclear migration. The chain is Nuclear distribution protein nudE homolog 1 (NDE1) from Cryptococcus neoformans var. neoformans serotype D (strain B-3501A) (Filobasidiella neoformans).